The primary structure comprises 320 residues: Beta-carotene 4-ketolase 3 (320 aa).

It carries out the reaction echinenone + 2 AH2 + 2 O2 = canthaxanthin + 2 A + 3 H2O. The catalysed reaction is all-trans-beta-carotene + 2 AH2 + 2 O2 = echinenone + 2 A + 3 H2O. Its pathway is carotenoid biosynthesis. Functionally, involved in the biosynthesis of ketocarotenoids which are powerful anti-oxidative molecules. Catalyzes the conversion of beta-carotene to canthaxanthin via echinenone. The protein is Beta-carotene 4-ketolase 3 of Haematococcus lacustris (Green alga).